A 348-amino-acid chain; its full sequence is MISPCSPPLEPPVPPPETPASQALSIPLPPLPLNLPELAFPPSSFQASVPPPPPLPPPPRTTGFAPPHVFGLEKSQLLKEALERAGPAPGSREDVKRLLKLHKDRFRSDLQWILFCADLPSLIQEGPQCGLVALWMAGTLLAPPGGTPLERLVQVAMERGYTAQGEMFSVADMGRLAQEALGCQAEVLCGGLGGPNRDHVLQHIVAGHPLLIPYDEDFNHEPCQRRGHKAHWAVSAGVLLGVQHVPSLGYSEDPELPGLFHPVPGTPHQPPSLPEEGSPGAVYLLAKQGKSWHHQLWDYDQVRDSNLQLTDFSPSRAADGREYVVPAGGVRAGLCGQALLLRPQDSSH.

Residues 1–18 (MISPCSPPLEPPVPPPET) show a composition bias toward pro residues. The interval 1-64 (MISPCSPPLE…LPPPPRTTGF (64 aa)) is disordered. The segment covering 34-48 (NLPELAFPPSSFQAS) has biased composition (low complexity). The segment covering 49 to 60 (VPPPPPLPPPPR) has biased composition (pro residues). Residues 121 to 241 (SLIQEGPQCG…WAVSAGVLLG (121 aa)) form a peptidase C39-like region. C129 is an active-site residue. S313 bears the Phosphoserine mark.

It belongs to the ACTMAP family. In terms of assembly, interacts (via N-terminus) with PFN2; the interaction may facilitate efficient cleavage of the acetylated N-terminus of immature actin. Interacts with PFN1.

Its subcellular location is the cytoplasm. The catalysed reaction is N-terminal N(alpha)-acetyl-L-methionyl-L-aspartyl-[protein] + H2O = N-terminal L-aspartyl-[protein] + N-acetyl-L-methionine. It catalyses the reaction N-terminal N(alpha)-acetyl-L-methionyl-L-glutamyl-[protein] + H2O = N-terminal L-glutamyl-[protein] + N-acetyl-L-methionine. The enzyme catalyses N-terminal N(alpha)-acetyl-L-cysteinyl-L-aspartyl-[protein] + H2O = N-terminal L-aspartyl-[protein] + N-acetyl-L-cysteine. It carries out the reaction N-terminal N(alpha)-acetyl-L-cysteinyl-L-glutamyl-[protein] + H2O = N-terminal L-glutamyl-[protein] + N-acetyl-L-cysteine. Its function is as follows. Actin maturation protease that specifically mediates the cleavage of immature acetylated N-terminal actin, thereby contributing to actin maturation. Cleaves N-terminal acetylated methionine of immature cytoplasmic beta- and gamma-actins ACTB and ACTG1 after translation. Cleaves N-terminal acetylated cysteine of muscle alpha-actins ACTA1, ACTC1 and ACTA2 after canonical removal of N-terminal methionine. The protein is Actin maturation protease of Bos taurus (Bovine).